A 354-amino-acid polypeptide reads, in one-letter code: Lysine racemase (354 aa).

Lys36 carries the post-translational modification N6-(pyridoxal phosphate)lysine.

It belongs to the alanine racemase family. As to quaternary structure, homodimer. It depends on pyridoxal 5'-phosphate as a cofactor.

The enzyme catalyses L-lysine = D-lysine. The catalysed reaction is L-ornithine = D-ornithine. It participates in cell wall biogenesis; peptidoglycan biosynthesis. Functionally, catalyzes the interconversion of D-lysine and L-lysine. Has also high activity toward ornithine, and weaker activity toward alanine. Contributes to production of D-lysine and D-alanine for use as peptidoglycan components. The polypeptide is Lysine racemase (Thermotoga maritima (strain ATCC 43589 / DSM 3109 / JCM 10099 / NBRC 100826 / MSB8)).